We begin with the raw amino-acid sequence, 471 residues long: uncharacterized protein (471 aa).

A run of 4 helical transmembrane segments spans residues alanine 10 to isoleucine 30, isoleucine 46 to isoleucine 66, threonine 87 to serine 107, and isoleucine 280 to alanine 300.

The protein belongs to the bacterial sugar transferase family.

Its subcellular location is the cell membrane. Its pathway is glycan metabolism; exopolysaccharide biosynthesis. Its function is as follows. May function as a sugar transferase. This is an uncharacterized protein from Haemophilus influenzae (strain ATCC 51907 / DSM 11121 / KW20 / Rd).